We begin with the raw amino-acid sequence, 1193 residues long: Structural maintenance of chromosomes protein 3 homolog (1193 aa).

31–38 (GFNGSGKS) contacts ATP. Residue Lys101 is modified to N6-acetyllysine. 2 coiled-coil regions span residues 179–286 (SKKV…LNKT) and 332–483 (ILRV…EIIK). An SMC hinge domain is found at 505 to 631 (ENILGFLIDN…VKSLESCENY (127 aa)). Positions 665–993 (TVYNKLKELK…SHKNIKDMIQ (329 aa)) form a coiled coil.

Belongs to the SMC family. SMC3 subfamily. Component of the cohesin complex. In terms of processing, acetylation at Lys-101 by ESCO1 is important for genome stability and S phase sister chromatid cohesion.

It localises to the nucleus. Its function is as follows. Central component of cohesin, a complex required for chromosome cohesion during the cell cycle. The cohesin complex may form a large proteinaceous ring within which sister chromatids can be trapped. At anaphase, the complex is cleaved and dissociates from chromatin, allowing sister chromatids to segregate. Cohesion is coupled to DNA replication and is involved in DNA repair. The cohesin complex also plays an important role in spindle pole assembly during mitosis and in chromosomes movement. This is Structural maintenance of chromosomes protein 3 homolog from Plasmodium falciparum (isolate 3D7).